The following is a 149-amino-acid chain: L-alanine exporter AlaE (149 aa).

Transmembrane regions (helical) follow at residues 16–36, 46–66, 83–105, and 115–135; these read FAMVVYCSVVNMLIEIFLSGM, LVAIPVNILIAWPYGVYRDLI, ADVLAYVTFQSPVYIIILLTVGA, and SSNIVVSMLMGAVYGYFLDYC.

Belongs to the AlaE exporter family.

The protein resides in the cell inner membrane. Its function is as follows. Exports L-alanine. The sequence is that of L-alanine exporter AlaE from Salmonella typhimurium (strain LT2 / SGSC1412 / ATCC 700720).